Consider the following 100-residue polypeptide: Urease subunit gamma (100 aa).

It belongs to the urease gamma subunit family. In terms of assembly, heterotrimer of UreA (gamma), UreB (beta) and UreC (alpha) subunits. Three heterotrimers associate to form the active enzyme.

It localises to the cytoplasm. It catalyses the reaction urea + 2 H2O + H(+) = hydrogencarbonate + 2 NH4(+). The protein operates within nitrogen metabolism; urea degradation; CO(2) and NH(3) from urea (urease route): step 1/1. The protein is Urease subunit gamma of Prochlorococcus marinus (strain MIT 9301).